A 92-amino-acid polypeptide reads, in one-letter code: Neuropeptide F (92 aa).

The signal sequence occupies residues 1-27 (MSQSRPLALLVVAALVAAAVLVAAAEA). Residues 28 to 51 (QQADGNKLEGLADALKYLQELDRY) constitute a propeptide that is removed on maturation. Position 60 is a phenylalanine amide (phenylalanine 60). The propeptide occupies 64 to 92 (AELRPDVVDDVIPEEMSADKFWRRFARRR).

The protein belongs to the NPY family. In terms of tissue distribution, widely expressed in the nervous system. Expressed in corpora cardiaca, hypocerebral ganglion, frontal ganglion, protocerebrum, antennal lobe, tritocerebrum and thoracic ganglia. Not detected in corpora allata, pars intercerebralis, circumesophageal connectives, subesophageal ganglion, abdominal ganglion and abdominal perisympathetic organs.

It localises to the secreted. Functionally, accelerates ovarian maturation in females. This Locusta migratoria (Migratory locust) protein is Neuropeptide F.